A 242-amino-acid chain; its full sequence is MVDYYEVLGVPRQASAEAIRKAYRKLALKWHPDKNPEHKEEAERRFKQVAQAYEVLSDVRKREVYDRCGEVGEVGGGGAAGSPFHDAFQYVFSFRDPAEVFREFFGGHDPFSFDFFGGDPLENFFGDRRSTRGSRSRGAVPFSTSFTEFPGFGGGFASLDTGFTSFGSPGNSGLSSFSMSCGGGAAGNYKSVSTSTEIINGKKITTKRIVENGQERVEVEEDGELKSLIINGREQLLRINTQ.

Residues 1 to 69 (MVDYYEVLGV…RKREVYDRCG (69 aa)) enclose the J domain.

Testis specific. Expression is confined to the germline without any contribution of the somatic components.

May operate as a co-chaperone of the male germ cell- and haploid stage-specific Hsp70 proteins. This Mus musculus (Mouse) protein is DnaJ homolog subfamily B member 3 (Dnajb3).